Consider the following 417-residue polypeptide: Gamma-glutamyl phosphate reductase (417 aa).

The protein belongs to the gamma-glutamyl phosphate reductase family.

The protein localises to the cytoplasm. It catalyses the reaction L-glutamate 5-semialdehyde + phosphate + NADP(+) = L-glutamyl 5-phosphate + NADPH + H(+). The protein operates within amino-acid biosynthesis; L-proline biosynthesis; L-glutamate 5-semialdehyde from L-glutamate: step 2/2. In terms of biological role, catalyzes the NADPH-dependent reduction of L-glutamate 5-phosphate into L-glutamate 5-semialdehyde and phosphate. The product spontaneously undergoes cyclization to form 1-pyrroline-5-carboxylate. The chain is Gamma-glutamyl phosphate reductase from Enterococcus faecalis (strain ATCC 700802 / V583).